Here is a 307-residue protein sequence, read N- to C-terminus: Type 2A encapsulin shell protein (307 aa).

Belongs to the encapsulin family. Family 2A subfamily. As to quaternary structure, the encapsulin nanocompartment is formed by 60 subunits; monomers form pentamers which assemble to form shells. There are 12 charged pores where the pentamers meet as well as 3-fold axis channels and dimer channels. Isolated from bacteria in a complex with cysteine desulfurase (AC Q9KII6).

It localises to the encapsulin nanocompartment. The protein localises to the cell membrane. Its function is as follows. Shell component of a type 2A encapsulin nanocompartment. Forms encapsulin nanocompartments about 24 nm in diameter from 60 monomers, probably involved in sulfur metabolism. Probably encapsulates cysteine desulfurase. The sequence is that of Type 2A encapsulin shell protein from Mycolicibacterium paratuberculosis (strain ATCC BAA-968 / K-10) (Mycobacterium paratuberculosis).